Reading from the N-terminus, the 247-residue chain is Orotidine 5'-phosphate decarboxylase (247 aa).

Substrate contacts are provided by residues Asp-22, Lys-44, 71 to 80, Thr-131, Arg-192, Gln-201, Gly-221, and Arg-222; that span reads DLKFHDIPNT. Catalysis depends on Lys-73, which acts as the Proton donor.

It belongs to the OMP decarboxylase family. Type 1 subfamily. In terms of assembly, homodimer.

The enzyme catalyses orotidine 5'-phosphate + H(+) = UMP + CO2. Its pathway is pyrimidine metabolism; UMP biosynthesis via de novo pathway; UMP from orotate: step 2/2. Its function is as follows. Catalyzes the decarboxylation of orotidine 5'-monophosphate (OMP) to uridine 5'-monophosphate (UMP). In Pectobacterium atrosepticum (strain SCRI 1043 / ATCC BAA-672) (Erwinia carotovora subsp. atroseptica), this protein is Orotidine 5'-phosphate decarboxylase.